Consider the following 377-residue polypeptide: RIB43A-like with coiled-coils protein 2 (377 aa).

Residues 217-246 are a coiled coil; sequence NKNQVVELTERKRQEKQQEQEDNMTEITNL. The disordered stretch occupies residues 354 to 377; that stretch reads KQMNTASSSQPTEDYFSQFNTRSR.

It belongs to the RIB43A family. Microtubule inner protein component of sperm flagellar doublet microtubules.

The protein resides in the cytoplasm. Its subcellular location is the cytoskeleton. It localises to the cilium axoneme. It is found in the flagellum axoneme. In terms of biological role, microtubule inner protein (MIP) part of the dynein-decorated doublet microtubules (DMTs) in cilia axoneme, which is required for motile cilia beating. This is RIB43A-like with coiled-coils protein 2 from Mus musculus (Mouse).